The sequence spans 660 residues: MNTNTNTNTNISSSGNNIINTPTTNNNNKNNNNNNNNNNNSNNSNNNSSNNNNNNNNAVGVKTGKKVNLKVETPVQNNENSYSLTTSGTFKEGDLLINKKGLLIKGESPKNSSVNDRNKNKSLHSNLNPQLLASPTSSESMDFNQGFYNNNNNNNNNNNNNNLNNFNNLMNNGIDSPQLSGISISTPTSSHSFNNTFTNYYNNNNNYNNYNNNNNSNNNNNNYNNSNNNFNNFNNYNNYGNNNNFNNFNALQSSSNSSFDISSSGSSNNYLNNSANNHPHYDTNLSYDLKDLKIIRVLGRGAGGVVKLAYHETSGTYIALKVITLDIQENIRKQIILELKTLHKTSYPYIVSFYDAFYTEGSIFIALEFMELGSLSDIMKKTSTIPEPVLGKIAFQVLQGLVYLHRKLHLIHRDIKPSNILVNNKGEAKIADFGVSGQLQHTLSKAVTWVGTVTYMSPERISGRSYSFDSEIWSLGLTILECAIGKFPYGSNLPHQQQQPLQQQQQQQQQQQQPLQQQQQQQQQQQQPLQLQLQNLDINNSNNNIRNSNNNNNNNNNNNNNNNNNNNNNVLDISNGGLVDSGSSVPEGMGFWVLLDCIVKEEVPILPSTFSKEFRSFISECLQKEPTERPTASNLLNHEFVKKYQNFNVEKWTANLKQQQ.

Low complexity predominate over residues 1–57 (MNTNTNTNTNISSSGNNIINTPTTNNNNKNNNNNNNNNNNSNNSNNNSSNNNNNNNN). 3 disordered regions span residues 1–60 (MNTN…NAVG), 105–169 (KGES…FNNL), and 204–229 (NNNY…SNNN). K105 is covalently cross-linked (Glycyl lysine isopeptide (Lys-Gly) (interchain with G-Cter in SUMO)). The span at 123–148 (LHSNLNPQLLASPTSSESMDFNQGFY) shows a compositional bias: polar residues. Residues 149-169 (NNNNNNNNNNNNNNLNNFNNL) show a composition bias toward low complexity. Residues 292-641 (LKIIRVLGRG…ASNLLNHEFV (350 aa)) enclose the Protein kinase domain. ATP-binding positions include 298 to 306 (LGRGAGGVV) and K321. D414 (proton acceptor) is an active-site residue. Disordered regions lie at residues 491 to 510 (SNLP…QQQQ) and 539 to 573 (NNSN…VLDI). Composition is skewed to low complexity over residues 496 to 510 (QQQQ…QQQQ) and 539 to 569 (NNSN…NNNN).

Belongs to the protein kinase superfamily. STE Ser/Thr protein kinase family. MAP kinase kinase subfamily. Interacts with mip1. The cofactor is Mg(2+). Sumoylated and ubiquitinated in response to chemoattractant stimulation. Sumoylation is linked to kinase activation and results in translocation.

The protein localises to the cytoplasm. The protein resides in the nucleus. The enzyme catalyses L-seryl-[protein] + ATP = O-phospho-L-seryl-[protein] + ADP + H(+). The catalysed reaction is L-threonyl-[protein] + ATP = O-phospho-L-threonyl-[protein] + ADP + H(+). It catalyses the reaction L-tyrosyl-[protein] + ATP = O-phospho-L-tyrosyl-[protein] + ADP + H(+). Required for cAMP-mediated activation of guanylyl cyclase activity and plays an essential role in aggregation, morphogenesis, and chemotaxis. Appears to act upstream of erk1 but not erk2. This is Dual specificity mitogen-activated protein kinase kinase 1 from Dictyostelium discoideum (Social amoeba).